Consider the following 157-residue polypeptide: Succinate dehydrogenase assembly factor 2-B, mitochondrial (157 aa).

The transit peptide at 1–22 directs the protein to the mitochondrion; that stretch reads MLSQWFRGRHLVVRSALFSRRR.

Belongs to the SDHAF2 family. In terms of assembly, interacts with the flavoprotein subunit within the SDH catalytic dimer.

It is found in the mitochondrion matrix. In terms of biological role, plays an essential role in the assembly of succinate dehydrogenase (SDH), an enzyme complex (also referred to as respiratory complex II) that is a component of both the tricarboxylic acid (TCA) cycle and the mitochondrial electron transport chain, and which couples the oxidation of succinate to fumarate with the reduction of ubiquinone (coenzyme Q) to ubiquinol. Required for flavinylation (covalent attachment of FAD) of the flavoprotein subunit of the SDH catalytic dimer. The sequence is that of Succinate dehydrogenase assembly factor 2-B, mitochondrial from Drosophila mojavensis (Fruit fly).